Consider the following 1637-residue polypeptide: Stress response protein NST1 (1637 aa).

Residues 1–17 (MSNRGNLNLNLPPSSGK) are compositionally biased toward polar residues. 10 disordered regions span residues 1–155 (MSNR…EITN), 221–252 (HQASNNNHIHNHSHTSSHPLQHTPNHLHHASH), 442–494 (LKMN…SQQL), 504–523 (KNNLQQNHHTHHHHQQPLQH), 681–734 (KTPY…EIDD), 746–825 (QHHH…EEEK), 871–1036 (AKRE…SKHV), 1049–1075 (SKQNQAQNGNQSHLPPQSRLRQDEENP), 1176–1299 (NSSQ…GAII), and 1512–1534 (YTQQQQQQQQPQPQPQSQQQYPL). Residues 24 to 33 (VHFELSKEKN) show a composition bias toward basic and acidic residues. Composition is skewed to low complexity over residues 34 to 53 (NSTNSNPHTSSTSTSNSNNT) and 64 to 113 (NDNN…QQQS). The segment covering 124–134 (AKKRKKKKSKK) has biased composition (basic residues). Over residues 135–155 (SSNNNGNNSNTNSNSNSEITN) the composition is skewed to low complexity. Residues 446–470 (QRQQSQSQSQSQSQQQRDVQTAQSQ) are compositionally biased toward low complexity. Residues 471–487 (VLSKDSSLKNANTSMNK) are compositionally biased toward polar residues. Residues 692–706 (PAATSQDREQQVQPN) show a composition bias toward polar residues. The segment covering 717–734 (DHEHEHEHEHEHEHEIDD) has biased composition (basic and acidic residues). A compositionally biased stretch (acidic residues) spans 754–808 (EEYDEEDEEDDEEYEYGDDEEEEDEEDEEEGEDEELEEVVEDDVDEEILDDEEEF). Residues 855–1023 (KDNTRKLFEE…KQLEKEAAVS (169 aa)) are a coiled coil. Basic and acidic residues-rich tracts occupy residues 871–887 (AKREKEAKKLKQKEKAK) and 896–1021 (AKEE…KEAA). The span at 1049 to 1063 (SKQNQAQNGNQSHLP) shows a compositional bias: polar residues. Positions 1176-1199 (NSSQGSPWTTNSTLSSNLGSTGLS) are enriched in low complexity. Positions 1201 to 1228 (GQGQTVSGVNTNLPSSIGITSGGASQIF) are enriched in polar residues. Positions 1234–1257 (PQLQPHQPQQQQQQQQQQQQQQQQ) are enriched in low complexity. Over residues 1258–1267 (NYFSPFNSFS) the composition is skewed to polar residues. 2 stretches are compositionally biased toward low complexity: residues 1282 to 1299 (TTNINNSTTASSSTGAII) and 1514 to 1534 (QQQQQQQQPQPQPQSQQQYPL).

It belongs to the NST1 family.

Its subcellular location is the cytoplasm. Functionally, may act as a negative regulator of salt tolerance. The sequence is that of Stress response protein NST1 (NST1) from Lodderomyces elongisporus (strain ATCC 11503 / CBS 2605 / JCM 1781 / NBRC 1676 / NRRL YB-4239) (Yeast).